We begin with the raw amino-acid sequence, 549 residues long: Glucose-6-phosphate isomerase (549 aa).

The Proton donor role is filled by Glu-355. Active-site residues include His-386 and Lys-514.

The protein belongs to the GPI family.

It is found in the cytoplasm. It carries out the reaction alpha-D-glucose 6-phosphate = beta-D-fructose 6-phosphate. It functions in the pathway carbohydrate biosynthesis; gluconeogenesis. The protein operates within carbohydrate degradation; glycolysis; D-glyceraldehyde 3-phosphate and glycerone phosphate from D-glucose: step 2/4. Catalyzes the reversible isomerization of glucose-6-phosphate to fructose-6-phosphate. The chain is Glucose-6-phosphate isomerase from Salmonella typhi.